The primary structure comprises 374 residues: Bifunctional enzyme IspD/IspF (374 aa).

Positions 1-213 (MLDVTLIVLC…PCLKAPSNNF (213 aa)) are 2-C-methyl-D-erythritol 4-phosphate cytidylyltransferase. The tract at residues 214–374 (FTGTGFDIHA…TLKYYNWKKR (161 aa)) is 2-C-methyl-D-erythritol 2,4-cyclodiphosphate synthase. Residues aspartate 220 and histidine 222 each contribute to the a divalent metal cation site. Residues 220 to 222 (DIH) and 246 to 247 (HS) each bind 4-CDP-2-C-methyl-D-erythritol 2-phosphate. Position 254 (histidine 254) interacts with a divalent metal cation. 4-CDP-2-C-methyl-D-erythritol 2-phosphate-binding positions include 268-270 (DIG), 273-277 (FPDTD), 344-347 (TTAE), phenylalanine 351, and arginine 354.

This sequence in the N-terminal section; belongs to the IspD/TarI cytidylyltransferase family. IspD subfamily. It in the C-terminal section; belongs to the IspF family. The cofactor is a divalent metal cation.

The catalysed reaction is 2-C-methyl-D-erythritol 4-phosphate + CTP + H(+) = 4-CDP-2-C-methyl-D-erythritol + diphosphate. The enzyme catalyses 4-CDP-2-C-methyl-D-erythritol 2-phosphate = 2-C-methyl-D-erythritol 2,4-cyclic diphosphate + CMP. It participates in isoprenoid biosynthesis; isopentenyl diphosphate biosynthesis via DXP pathway; isopentenyl diphosphate from 1-deoxy-D-xylulose 5-phosphate: step 2/6. The protein operates within isoprenoid biosynthesis; isopentenyl diphosphate biosynthesis via DXP pathway; isopentenyl diphosphate from 1-deoxy-D-xylulose 5-phosphate: step 4/6. Functionally, bifunctional enzyme that catalyzes the formation of 4-diphosphocytidyl-2-C-methyl-D-erythritol from CTP and 2-C-methyl-D-erythritol 4-phosphate (MEP) (IspD), and catalyzes the conversion of 4-diphosphocytidyl-2-C-methyl-D-erythritol 2-phosphate (CDP-ME2P) to 2-C-methyl-D-erythritol 2,4-cyclodiphosphate (ME-CPP) with a corresponding release of cytidine 5-monophosphate (CMP) (IspF). This is Bifunctional enzyme IspD/IspF from Aliarcobacter butzleri (strain RM4018) (Arcobacter butzleri).